A 381-amino-acid chain; its full sequence is MRSKKLWISLLFALTLIFTMAFSNMSAQAAGKSSTEKKYIVGFKQTMSAMSSAKKKDVISEKGGKVQKQFKYVNAAAATLDEKAVKELKKDPSVAYVEEDHIAHEYAQSVPYGISQIKAPALHSQGYTGSNVKVAVIDSGIDSSHPDLNVRGGASFVPSETNPYQDGSSHGTHVAGTIAALNNSIGVLGVAPSASLYAVKVLDSTGSGQYSWIINGIEWAISNNMDVINMSLGGPTGSTALKTVVDKAVSSGIVVAAAAGNEGSSGSTSTVGYPAKYPSTIAVGAVNSSNQRASFSSVGSELDVMAPGVSIQSTLPGGTYGAYNGTSMATPHVAGAAALILSKHPTWTNAQVRDRLESTATYLGNSFYYGKGLINVQAAAQ.

Positions 1–29 are cleaved as a signal peptide; sequence MRSKKLWISLLFALTLIFTMAFSNMSAQA. The propeptide occupies 30–106; it reads AGKSSTEKKY…VEEDHIAHEY (77 aa). The Inhibitor I9 domain maps to 38–103; it reads KYIVGFKQTM…VAYVEEDHIA (66 aa). Residues 111–380 form the Peptidase S8 domain; it reads PYGISQIKAP…KGLINVQAAA (270 aa). Catalysis depends on Asp-138, which acts as the Charge relay system. Asp-147 lines the Ca(2+) pocket. The Charge relay system role is filled by His-170. Positions 181, 183, 185, 187, 275, 277, 280, and 303 each coordinate Ca(2+). The active-site Charge relay system is the Ser-327.

This sequence belongs to the peptidase S8 family. Monomer. The cofactor is Ca(2+).

The protein resides in the secreted. It carries out the reaction Hydrolysis of proteins with broad specificity for peptide bonds, and a preference for a large uncharged residue in P1. Hydrolyzes peptide amides.. Its activity is regulated as follows. Inhibited by PMSF (phenylmethylsulfonyl fluoride). In terms of biological role, subtilisin is an extracellular alkaline serine protease, it catalyzes the hydrolysis of proteins and peptide amides. Subtilisin NAT also has fibrinolytic activity. The polypeptide is Subtilisin NAT (Bacillus subtilis subsp. natto).